An 85-amino-acid chain; its full sequence is uncharacterized protein (85 aa).

The disordered stretch occupies residues 1–85 (MRWRPSSWSA…DQEQCGQHCR (85 aa)). A compositionally biased stretch (basic and acidic residues) spans 47 to 61 (ASVEGEGGRHADRHG).

This is an uncharacterized protein from Streptomyces lividans.